We begin with the raw amino-acid sequence, 249 residues long: 2,3-bisphosphoglycerate-dependent phosphoglycerate mutase (249 aa).

Substrate is bound by residues 9 to 16 (RHGQSQWN), 22 to 23 (TG), Arg-61, 88 to 91 (ERHY), Lys-99, 115 to 116 (RR), and 184 to 185 (GN). His-10 acts as the Tele-phosphohistidine intermediate in catalysis. The active-site Proton donor/acceptor is the Glu-88.

The protein belongs to the phosphoglycerate mutase family. BPG-dependent PGAM subfamily. As to quaternary structure, homodimer.

The enzyme catalyses (2R)-2-phosphoglycerate = (2R)-3-phosphoglycerate. Its pathway is carbohydrate degradation; glycolysis; pyruvate from D-glyceraldehyde 3-phosphate: step 3/5. Catalyzes the interconversion of 2-phosphoglycerate and 3-phosphoglycerate. This Stenotrophomonas maltophilia (strain K279a) protein is 2,3-bisphosphoglycerate-dependent phosphoglycerate mutase.